The primary structure comprises 435 residues: F-box/FBD/LRR-repeat protein At1g51370 (435 aa).

The region spanning 18–64 is the F-box domain; sequence EDRISQLPEPLISEILFHLSTKDSVRTSALSTKWRYLWQSVPGLDLD. LRR repeat units follow at residues 123–148, 170–195, 234–259, 262–287, and 314–340; these read VHCF…RLRW, VSYP…ILFS, AKMY…DFVN, GRYQ…VISS, and RFYI…ILEM. The region spanning 354–406 is the FBD domain; sequence EPNVMVSTVPWCLVSSLKFVELKRSIPRYEGEMELVRYVLTNSTVLKKLRLNV.

This Arabidopsis thaliana (Mouse-ear cress) protein is F-box/FBD/LRR-repeat protein At1g51370.